The sequence spans 99 residues: Aspartyl/glutamyl-tRNA(Asn/Gln) amidotransferase subunit C (99 aa).

The protein belongs to the GatC family. Heterotrimer of A, B and C subunits.

It catalyses the reaction L-glutamyl-tRNA(Gln) + L-glutamine + ATP + H2O = L-glutaminyl-tRNA(Gln) + L-glutamate + ADP + phosphate + H(+). The enzyme catalyses L-aspartyl-tRNA(Asn) + L-glutamine + ATP + H2O = L-asparaginyl-tRNA(Asn) + L-glutamate + ADP + phosphate + 2 H(+). Functionally, allows the formation of correctly charged Asn-tRNA(Asn) or Gln-tRNA(Gln) through the transamidation of misacylated Asp-tRNA(Asn) or Glu-tRNA(Gln) in organisms which lack either or both of asparaginyl-tRNA or glutaminyl-tRNA synthetases. The reaction takes place in the presence of glutamine and ATP through an activated phospho-Asp-tRNA(Asn) or phospho-Glu-tRNA(Gln). The chain is Aspartyl/glutamyl-tRNA(Asn/Gln) amidotransferase subunit C from Burkholderia vietnamiensis (strain G4 / LMG 22486) (Burkholderia cepacia (strain R1808)).